Reading from the N-terminus, the 51-residue chain is Protein HokD (51 aa).

The chain crosses the membrane as a helical span at residues 5-25 (KAMLIALIVICLTVIVTALVT).

Belongs to the Hok/Gef family.

The protein resides in the cell inner membrane. Toxic component of a type I toxin-antitoxin (TA) system. When overexpressed kills cells within minutes; causes collapse of the transmembrane potential and arrest of respiration. Its toxic effect is probably neutralized by an antisense antitoxin Sok RNA. This is Protein HokD (hokD) from Escherichia coli O157:H7.